The primary structure comprises 222 residues: Thiamine-phosphate synthase (222 aa).

Residues 44–48 (QVRMK) and Asn75 contribute to the 4-amino-2-methyl-5-(diphosphooxymethyl)pyrimidine site. Mg(2+) contacts are provided by Asp76 and Asp95. Thr114 lines the 4-amino-2-methyl-5-(diphosphooxymethyl)pyrimidine pocket. 140 to 142 (SRS) contributes to the 2-[(2R,5Z)-2-carboxy-4-methylthiazol-5(2H)-ylidene]ethyl phosphate binding site. Lys143 lines the 4-amino-2-methyl-5-(diphosphooxymethyl)pyrimidine pocket. Gly171 is a binding site for 2-[(2R,5Z)-2-carboxy-4-methylthiazol-5(2H)-ylidene]ethyl phosphate.

Belongs to the thiamine-phosphate synthase family. Mg(2+) is required as a cofactor.

It carries out the reaction 2-[(2R,5Z)-2-carboxy-4-methylthiazol-5(2H)-ylidene]ethyl phosphate + 4-amino-2-methyl-5-(diphosphooxymethyl)pyrimidine + 2 H(+) = thiamine phosphate + CO2 + diphosphate. The enzyme catalyses 2-(2-carboxy-4-methylthiazol-5-yl)ethyl phosphate + 4-amino-2-methyl-5-(diphosphooxymethyl)pyrimidine + 2 H(+) = thiamine phosphate + CO2 + diphosphate. The catalysed reaction is 4-methyl-5-(2-phosphooxyethyl)-thiazole + 4-amino-2-methyl-5-(diphosphooxymethyl)pyrimidine + H(+) = thiamine phosphate + diphosphate. The protein operates within cofactor biosynthesis; thiamine diphosphate biosynthesis; thiamine phosphate from 4-amino-2-methyl-5-diphosphomethylpyrimidine and 4-methyl-5-(2-phosphoethyl)-thiazole: step 1/1. Functionally, condenses 4-methyl-5-(beta-hydroxyethyl)thiazole monophosphate (THZ-P) and 2-methyl-4-amino-5-hydroxymethyl pyrimidine pyrophosphate (HMP-PP) to form thiamine monophosphate (TMP). The polypeptide is Thiamine-phosphate synthase (Anaeromyxobacter dehalogenans (strain 2CP-C)).